Reading from the N-terminus, the 292-residue chain is Oxidative stress-responsive serine-rich protein 1 (292 aa).

The interval 24–178 (ASGSVASLSV…ATQVPQASLK (155 aa)) is disordered. Positions 65-83 (STRKSSRGAVRTQRRRRSK) are enriched in basic residues. Residues Thr143 and Thr233 each carry the phosphothreonine modification.

This is Oxidative stress-responsive serine-rich protein 1 (OSER1) from Homo sapiens (Human).